An 861-amino-acid chain; its full sequence is MQEQYRPDMIEPKVQQYWVENKVFKAIKDESKEKYYCLSMFPYPSGRLHMGHVRNYTIGDVISRYQRMLGKNVLQPFGWDAFGLPAEGAAIKNKTAPAKWTYENIAYMKKQLQLLGFGFDWDREIATCKPEYYKWEQWFFTELYKKGLVYKKTSTVNWCPNDETVLANEQVHEGCCWRCDTPVEQKEIPQWFIKITDYAEQLLGGLDTLPQWPDMVKTMQRNWIGRSEGVEITFDVANTNEKVAVYTTRPDTFYGVSYLGIAAAHPLASLAAQNNPELAAFIQEAKNAKVAEADLATMEKKGMATGLFAIHPLTGEKLPIWVANFVLMHYGTGAVMAVPAHDQRDFEFAQKYSLPIKQVIAPLADEEIDLTKQAFVEHGKLVNSAEFDGKDFDGAFNGIADKLEKLGVGKRQVNYRLRDWGVSRQRYWGAPIPMLTLENGDVVPAPMEDLPIILPEDVVMDGVKSPIKADPNWAKTTLNGTPALKETDTFDTFMESSWYYARYTCPQYQNGMLDAEEANYWLPVDQYIGGIEHATMHLLYFRFFHKLLRDAGFVTSEEPADKLLCQGMVLADAFYYTSPTNERIWVSPTQVTLERDEKGRIIKATDPEGRELVHSGMTKMSKSKNNGIDPQEMVEKYGADTVRLFMMFASPAEMTLEWQESGVEGAKRFLGRVWNLVYQYQQNPAKTSLDITALSAEQKVLRREVHKTIAKVSDDIGRRQTFNTAIAAVMELMNKLTKAPLDSEQDRAVMAEALSAVVRMLYPITPHICFELWQALGNESAIDTAEWVKADEAAMVEDEKLIVVQVNGKVRGKVTVAADADEDTVKTIAFADENVKKFIDNQHIVKVIYVVGKLLNVVVKP.

Positions 42 to 52 (PYPSGRLHMGH) match the 'HIGH' region motif. Residues 619-623 (KMSKS) carry the 'KMSKS' region motif. Lys-622 contacts ATP.

Belongs to the class-I aminoacyl-tRNA synthetase family.

The protein localises to the cytoplasm. The catalysed reaction is tRNA(Leu) + L-leucine + ATP = L-leucyl-tRNA(Leu) + AMP + diphosphate. The chain is Leucine--tRNA ligase from Haemophilus influenzae (strain PittGG).